Here is a 164-residue protein sequence, read N- to C-terminus: MNKEPMSMHGYNKICAELKQLKEVERPNIVKEIDIARGHGDLKENAEYHAAKEKQRFIEARIVDLSEIVANAQVIDPSALAHNKVSFGSTIKILNLDNDKEFSYTIVGSVESDPAKGLISFGSPIAKSLIGKSKGDAVSIQLPNGESDFEILDIYYKEICFDEN.

This sequence belongs to the GreA/GreB family.

Functionally, necessary for efficient RNA polymerase transcription elongation past template-encoded arresting sites. The arresting sites in DNA have the property of trapping a certain fraction of elongating RNA polymerases that pass through, resulting in locked ternary complexes. Cleavage of the nascent transcript by cleavage factors such as GreA or GreB allows the resumption of elongation from the new 3'terminus. GreA releases sequences of 2 to 3 nucleotides. The chain is Transcription elongation factor GreA from Helicobacter pylori (strain J99 / ATCC 700824) (Campylobacter pylori J99).